A 342-amino-acid chain; its full sequence is tRNA (guanine(26)-N(2))-dimethyltransferase (342 aa).

The Trm1 methyltransferase domain maps to 1–336 (MRITEGSAVI…CPYAEVSEIL (336 aa)). S-adenosyl-L-methionine contacts are provided by Arg35, Arg60, and Glu76.

Belongs to the class I-like SAM-binding methyltransferase superfamily. Trm1 family.

It catalyses the reaction guanosine(26) in tRNA + 2 S-adenosyl-L-methionine = N(2)-dimethylguanosine(26) in tRNA + 2 S-adenosyl-L-homocysteine + 2 H(+). Dimethylates a single guanine residue at position 26 of a number of tRNAs using S-adenosyl-L-methionine as donor of the methyl groups. The chain is tRNA (guanine(26)-N(2))-dimethyltransferase from Thermoplasma volcanium (strain ATCC 51530 / DSM 4299 / JCM 9571 / NBRC 15438 / GSS1).